The following is a 61-amino-acid chain: ATP synthase subunit J, mitochondrial (61 aa).

A helical transmembrane segment spans residues 13–32 (LVKYYWPFFVGFGLTFYGVA).

As to quaternary structure, F-type ATP synthases have 2 components, the catalytic core F(1) and the membrane-embedded component F(0), linked together by a central stalk and a peripheral stalk. The central stalk, also called rotor shaft, is often seen as part of F(1). The peripheral stalk is seen as part of F(0). F(0) contains the membrane channel next to the rotor. F-type ATP synthases form dimers but each monomer functions independently in ATP generation. The dimer consists of 18 different polypeptides: ATP1 (subunit alpha, part of F(1), 3 molecules per monomer), ATP2 (subunit beta, part of F(1), 3 molecules per monomer), ATP3 (subunit gamma, part of the central stalk), ATP4 (subunit b, part of the peripheral stalk), ATP5/OSCP (subunit 5/OSCP, part of the peripheral stalk), ATP6 (subunit a, part of the peripheral stalk), ATP7 (subunit d, part of the peripheral stalk), ATP8 (subunit 8, part of the peripheral stalk), OLI1 (subunit c, part of the rotor, 10 molecules per monomer), ATP14 (subunit h, part of the peripheral stalk), ATP15 (subunit epsilon, part of the central stalk), ATP16 (subunit delta, part of the central stalk), ATP17 (subunit f, part of the peripheral stalk), ATP18 (subunit i/j, part of the peripheral stalk). Dimer-specific subunits are ATP19 (subunit k, at interface between monomers), ATP20 (subunit g, at interface between monomers), TIM11 (subunit e, at interface between monomers). Also contains subunit L.

The protein resides in the mitochondrion inner membrane. Its function is as follows. Mitochondrial membrane ATP synthase (F(1)F(0) ATP synthase or Complex V) produces ATP from ADP in the presence of a proton gradient across the membrane which is generated by electron transport complexes of the respiratory chain. F-type ATP synthases consist of two structural domains, F(1) - containing the extramembraneous catalytic core, and F(0) - containing the membrane proton channel, linked together by a central stalk and a peripheral stalk. During catalysis, ATP synthesis in the catalytic domain of F(1) is coupled via a rotary mechanism of the central stalk subunits to proton translocation. Part of the complex F(0) domain. Minor subunit located with subunit a/ATP6 in the membrane. The chain is ATP synthase subunit J, mitochondrial from Pichia angusta (Yeast).